A 34-amino-acid polypeptide reads, in one-letter code: uncharacterized protein (34 aa).

The chain crosses the membrane as a helical span at residues 10–30 (LIITSSFFAIAAVLVLSVLLI).

It localises to the membrane. This is an uncharacterized protein from Escherichia coli O6:H1 (strain CFT073 / ATCC 700928 / UPEC).